We begin with the raw amino-acid sequence, 141 residues long: Large ribosomal subunit protein uL16 (141 aa).

Belongs to the universal ribosomal protein uL16 family. Part of the 50S ribosomal subunit.

Its function is as follows. Binds 23S rRNA and is also seen to make contacts with the A and possibly P site tRNAs. The chain is Large ribosomal subunit protein uL16 from Rhodospirillum centenum (strain ATCC 51521 / SW).